The sequence spans 177 residues: MSELTTVARPYAKAAFDFALEQGALDKWAEMLSFAAAVAQDETIASFLSSSSTVGKTTEVFLGVCGDELDDNAKNFVKVLAENERLPVLPAVSELYQTLRAEHDKEVTVDVKSAVKLLKAQQTALIKALEKRLQRKIKLNCSVDKSIIGGLVIEAGDTVIDGTLRGKLDRLAYALQS.

It belongs to the ATPase delta chain family. F-type ATPases have 2 components, F(1) - the catalytic core - and F(0) - the membrane proton channel. F(1) has five subunits: alpha(3), beta(3), gamma(1), delta(1), epsilon(1). F(0) has three main subunits: a(1), b(2) and c(10-14). The alpha and beta chains form an alternating ring which encloses part of the gamma chain. F(1) is attached to F(0) by a central stalk formed by the gamma and epsilon chains, while a peripheral stalk is formed by the delta and b chains.

The protein resides in the cell inner membrane. In terms of biological role, f(1)F(0) ATP synthase produces ATP from ADP in the presence of a proton or sodium gradient. F-type ATPases consist of two structural domains, F(1) containing the extramembraneous catalytic core and F(0) containing the membrane proton channel, linked together by a central stalk and a peripheral stalk. During catalysis, ATP synthesis in the catalytic domain of F(1) is coupled via a rotary mechanism of the central stalk subunits to proton translocation. This protein is part of the stalk that links CF(0) to CF(1). It either transmits conformational changes from CF(0) to CF(1) or is implicated in proton conduction. This chain is ATP synthase subunit delta, found in Idiomarina loihiensis (strain ATCC BAA-735 / DSM 15497 / L2-TR).